Reading from the N-terminus, the 553-residue chain is RNA N(6)-adenosine-methyltransferase METTL16 (553 aa).

An RNA-binding region spans residues 17–20 (PPDF). S-adenosyl-L-methionine is bound by residues R82, G110, S114, E133, T164, and N184. Residues 163 to 167 (KTLLM) form a K-loop region. RNA-binding stretches follow at residues 199 to 211 (SRNS…SSVN), 250 to 254 (GKKCS), and 277 to 283 (QGRTMRW). Residues 289–400 (FYDDVTVPSP…QLREVPRAPE (112 aa)) form a VCR 1 region. Phosphoserine occurs at positions 329, 425, and 429. A disordered region spans residues 457–496 (EETPEATEDERDEERGGMEAMESCKGSSNGAQDGEASEKG). The segment covering 458-468 (ETPEATEDERD) has biased composition (acidic residues). Residue T463 is modified to Phosphothreonine. The VCR 2 stretch occupies residues 506 to 553 (YLFKCLVNIKKEAGDAVVEMHWVEGQNRDLMNQLCTYVRNQILRLVAS).

This sequence belongs to the methyltransferase superfamily. METTL16/RlmF family. Interacts with MEPCE. Interacts with LARP7.

Its subcellular location is the nucleus. It is found in the cytoplasm. The catalysed reaction is adenosine in U6 snRNA + S-adenosyl-L-methionine = N(6)-methyladenosine in U6 snRNA + S-adenosyl-L-homocysteine + H(+). The enzyme catalyses an adenosine in mRNA + S-adenosyl-L-methionine = an N(6)-methyladenosine in mRNA + S-adenosyl-L-homocysteine + H(+). With respect to regulation, methyltransferase activity is autoinhibited by the K-loop region that blocks S-adenosyl-L-methionine-binding. Upon activation, K-loop changes conformation, allowing S-adenosyl-L-methionine-binding and subsequent methyltransferase activity. mRNA N6-adenosine-methyltransferase activity is inhibited by zinc. Functionally, RNA N6-methyltransferase that methylates adenosine residues at the N(6) position of a subset of RNAs and is involved in S-adenosyl-L-methionine homeostasis by regulating expression of MAT2A transcripts. Able to N6-methylate a subset of mRNAs and U6 small nuclear RNAs (U6 snRNAs). In contrast to the METTL3-METTL14 heterodimer, only able to methylate a limited number of RNAs: requires both a 5'UACAGAGAA-3' nonamer sequence and a specific RNA structure. Plays a key role in S-adenosyl-L-methionine homeostasis by mediating N6-methylation of MAT2A mRNAs, altering splicing of MAT2A transcripts: in presence of S-adenosyl-L-methionine, binds the 3'-UTR region of MAT2A mRNA and specifically N6-methylates the first hairpin of MAT2A mRNA, preventing recognition of their 3'-splice site by U2AF1/U2AF35, thereby inhibiting splicing and protein production of S-adenosylmethionine synthase. In S-adenosyl-L-methionine-limiting conditions, binds the 3'-UTR region of MAT2A mRNA but stalls due to the lack of a methyl donor, preventing N6-methylation and promoting expression of MAT2A. In addition to mRNAs, also able to mediate N6-methylation of U6 small nuclear RNA (U6 snRNA): specifically N6-methylates adenine in position 43 of U6 snRNAs. Also able to bind various lncRNAs, such as 7SK snRNA (7SK RNA) or 7SL RNA. Specifically binds the 3'-end of the MALAT1 long non-coding RNA. The chain is RNA N(6)-adenosine-methyltransferase METTL16 from Mus musculus (Mouse).